The chain runs to 116 residues: NADH-ubiquinone oxidoreductase chain 3 (116 aa).

3 helical membrane passes run 3 to 23, 56 to 76, and 87 to 107; these read LITTIITITITLSAVLATVSF, FFLIAILFLLFDLEIALLLPL, and LTLVWSTAVLALLTLGLIYEW.

Belongs to the complex I subunit 3 family.

It localises to the mitochondrion membrane. It catalyses the reaction a ubiquinone + NADH + 5 H(+)(in) = a ubiquinol + NAD(+) + 4 H(+)(out). Its function is as follows. Core subunit of the mitochondrial membrane respiratory chain NADH dehydrogenase (Complex I) that is believed to belong to the minimal assembly required for catalysis. Complex I functions in the transfer of electrons from NADH to the respiratory chain. The immediate electron acceptor for the enzyme is believed to be ubiquinone. This chain is NADH-ubiquinone oxidoreductase chain 3 (MT-ND3), found in Oncorhynchus kisutch (Coho salmon).